The primary structure comprises 165 residues: Destrin (165 aa).

Position 2 is an N-acetylalanine (alanine 2). Serine 3 carries the post-translational modification Phosphoserine. The 150-residue stretch at 4-153 folds into the ADF-H domain; sequence GVQVADEVCR…NRACIAEKLG (150 aa). Lysine 19 bears the N6-acetyllysine mark. The Nuclear localization signal motif lies at 30 to 34; the sequence is KKRKK.

The protein belongs to the actin-binding proteins ADF family. Post-translationally, ISGylated.

In terms of biological role, actin-depolymerizing protein. Severs actin filaments (F-actin) and binds to actin monomers (G-actin). Acts in a pH-independent manner. This is Destrin (DSTN) from Bos taurus (Bovine).